The chain runs to 122 residues: Large ribosomal subunit protein uL14 (122 aa).

This sequence belongs to the universal ribosomal protein uL14 family. In terms of assembly, part of the 50S ribosomal subunit. Forms a cluster with proteins L3 and L19. In the 70S ribosome, L14 and L19 interact and together make contacts with the 16S rRNA in bridges B5 and B8.

In terms of biological role, binds to 23S rRNA. Forms part of two intersubunit bridges in the 70S ribosome. The polypeptide is Large ribosomal subunit protein uL14 (Exiguobacterium sibiricum (strain DSM 17290 / CCUG 55495 / CIP 109462 / JCM 13490 / 255-15)).